We begin with the raw amino-acid sequence, 178 residues long: GPI mannosyltransferase 2 subunit C167.09 (178 aa).

Positions Met1–Ala20 are cleaved as a signal peptide. At Asn21 to Pro152 the chain is on the lumenal side. 5 N-linked (GlcNAc...) asparagine glycosylation sites follow: Asn48, Asn49, Asn106, Asn115, and Asn122. A helical transmembrane segment spans residues Ile153–Ile173. Topologically, residues Lys174–Asp178 are cytoplasmic.

In terms of assembly, part of the GPI mannosyltransferase 2 complex composed of gpi18 and C167.09.

It is found in the endoplasmic reticulum membrane. It functions in the pathway glycolipid biosynthesis; glycosylphosphatidylinositol-anchor biosynthesis. Essential component of the GPI mannosyltransferase 2 complex. Responsible for the transfer of the second mannose to the glycosylphosphatidylinositol during GPI precursor assembly. The protein is GPI mannosyltransferase 2 subunit C167.09 of Schizosaccharomyces pombe (strain 972 / ATCC 24843) (Fission yeast).